The chain runs to 129 residues: Large ribosomal subunit protein uL22 (129 aa).

The protein belongs to the universal ribosomal protein uL22 family. In terms of assembly, part of the 50S ribosomal subunit.

This protein binds specifically to 23S rRNA; its binding is stimulated by other ribosomal proteins, e.g. L4, L17, and L20. It is important during the early stages of 50S assembly. It makes multiple contacts with different domains of the 23S rRNA in the assembled 50S subunit and ribosome. Functionally, the globular domain of the protein is located near the polypeptide exit tunnel on the outside of the subunit, while an extended beta-hairpin is found that lines the wall of the exit tunnel in the center of the 70S ribosome. This is Large ribosomal subunit protein uL22 from Onion yellows phytoplasma (strain OY-M).